The sequence spans 428 residues: Histidinol dehydrogenase (428 aa).

Residues tyrosine 129, glutamine 188, and asparagine 211 each coordinate NAD(+). Serine 234, glutamine 256, and histidine 259 together coordinate substrate. Zn(2+) contacts are provided by glutamine 256 and histidine 259. Catalysis depends on proton acceptor residues glutamate 323 and histidine 324. 4 residues coordinate substrate: histidine 324, aspartate 357, glutamate 411, and histidine 416. Aspartate 357 provides a ligand contact to Zn(2+). Histidine 416 lines the Zn(2+) pocket.

The protein belongs to the histidinol dehydrogenase family. Zn(2+) is required as a cofactor.

The enzyme catalyses L-histidinol + 2 NAD(+) + H2O = L-histidine + 2 NADH + 3 H(+). Its pathway is amino-acid biosynthesis; L-histidine biosynthesis; L-histidine from 5-phospho-alpha-D-ribose 1-diphosphate: step 9/9. In terms of biological role, catalyzes the sequential NAD-dependent oxidations of L-histidinol to L-histidinaldehyde and then to L-histidine. The protein is Histidinol dehydrogenase of Caulobacter vibrioides (strain ATCC 19089 / CIP 103742 / CB 15) (Caulobacter crescentus).